The following is a 118-amino-acid chain: Large ribosomal subunit protein uL18 (118 aa).

The protein belongs to the universal ribosomal protein uL18 family. Part of the 50S ribosomal subunit; part of the 5S rRNA/L5/L18/L25 subcomplex. Contacts the 5S and 23S rRNAs.

Functionally, this is one of the proteins that bind and probably mediate the attachment of the 5S RNA into the large ribosomal subunit, where it forms part of the central protuberance. The polypeptide is Large ribosomal subunit protein uL18 (Nitratiruptor sp. (strain SB155-2)).